Here is a 245-residue protein sequence, read N- to C-terminus: 1-(5-phosphoribosyl)-5-[(5-phosphoribosylamino)methylideneamino] imidazole-4-carboxamide isomerase (245 aa).

The Proton acceptor role is filled by Asp-7. Residue Asp-129 is the Proton donor of the active site.

It belongs to the HisA/HisF family.

The protein localises to the cytoplasm. The enzyme catalyses 1-(5-phospho-beta-D-ribosyl)-5-[(5-phospho-beta-D-ribosylamino)methylideneamino]imidazole-4-carboxamide = 5-[(5-phospho-1-deoxy-D-ribulos-1-ylimino)methylamino]-1-(5-phospho-beta-D-ribosyl)imidazole-4-carboxamide. It functions in the pathway amino-acid biosynthesis; L-histidine biosynthesis; L-histidine from 5-phospho-alpha-D-ribose 1-diphosphate: step 4/9. This Enterobacter sp. (strain 638) protein is 1-(5-phosphoribosyl)-5-[(5-phosphoribosylamino)methylideneamino] imidazole-4-carboxamide isomerase.